A 251-amino-acid chain; its full sequence is Probable transcriptional regulatory protein cgR_1708 (251 aa).

The interval 1–22 (MAGHSKWATTKHKKAANDAKRG) is disordered.

This sequence belongs to the TACO1 family.

Its subcellular location is the cytoplasm. The chain is Probable transcriptional regulatory protein cgR_1708 from Corynebacterium glutamicum (strain R).